The following is a 65-amino-acid chain: Myosin-11 (65 aa).

A Myosin motor domain is found at 1–65 (RSGKLDAFLV…NWQWWRLFTK (65 aa)).

This sequence belongs to the TRAFAC class myosin-kinesin ATPase superfamily. Myosin family. In terms of assembly, muscle myosin is a hexameric protein that consists of 2 heavy chain subunits (MHC), 2 alkali light chain subunits (MLC) and 2 regulatory light chain subunits (MLC-2).

It localises to the melanosome. It is found in the cytoplasm. The protein localises to the myofibril. Functionally, muscle contraction. This Sus scrofa (Pig) protein is Myosin-11 (MYH11).